Here is a 129-residue protein sequence, read N- to C-terminus: Large ribosomal subunit protein bL19c (129 aa).

It belongs to the bacterial ribosomal protein bL19 family.

Its subcellular location is the plastid. The polypeptide is Large ribosomal subunit protein bL19c (Prototheca wickerhamii).